Here is a 276-residue protein sequence, read N- to C-terminus: MIREWQVLTTERMEPALNMAIDEALIGFVGRGEVAPTLRFYSWEPRGLSVGHFQRATKDIDRNRIEALGIPIVRRMTGGRAVLHADELTYSVILPEQMEGVPKTVIESYRMLTEGIRKGYHHLGIPVEFSVPMTEEEKEELRKPKSAVCFDAASYYELAVGKRKVAGSAQVRHQGVVLQHGSVPLSVDEGELFDCFLYEDETMRERMKARFAGKAVALNELAGRSVSFEEVRLAFVKGFEDALQLTFRPLEFNSTQWQEIERLAEKYRSEEWNWKR.

Residues 32–247 (GEVAPTLRFY…GFEDALQLTF (216 aa)) form the BPL/LPL catalytic domain. C149 (acyl-thioester intermediate) is an active-site residue.

The protein belongs to the octanoyltransferase LipM family. In terms of assembly, monomer.

It catalyses the reaction octanoyl-[ACP] + L-lysyl-[protein] = N(6)-octanoyl-L-lysyl-[protein] + holo-[ACP] + H(+). Its pathway is protein modification; protein lipoylation via endogenous pathway; protein N(6)-(lipoyl)lysine from octanoyl-[acyl-carrier-protein]. In terms of biological role, catalyzes the transfer of endogenously produced octanoic acid from octanoyl-acyl-carrier-protein onto the lipoyl domain of GcvH, an intermediate carrier during protein lipoylation. The protein is Octanoyltransferase LipM of Exiguobacterium sibiricum (strain DSM 17290 / CCUG 55495 / CIP 109462 / JCM 13490 / 255-15).